Here is a 272-residue protein sequence, read N- to C-terminus: HMP-PP phosphatase (272 aa).

The active-site Nucleophile is D8. Residues D8, D10, and D212 each coordinate Mg(2+).

This sequence belongs to the HAD-like hydrolase superfamily. Cof family. Mg(2+) is required as a cofactor.

It catalyses the reaction 4-amino-2-methyl-5-(diphosphooxymethyl)pyrimidine + H2O = 4-amino-2-methyl-5-(phosphooxymethyl)pyrimidine + phosphate + H(+). Functionally, catalyzes the hydrolysis of 4-amino-2-methyl-5-hydroxymethylpyrimidine pyrophosphate (HMP-PP) to 4-amino-2-methyl-5-hydroxymethylpyrimidine phosphate (HMP-P). This is HMP-PP phosphatase from Salmonella typhi.